Reading from the N-terminus, the 768-residue chain is Calcium up-regulated protein G (768 aa).

A disordered region spans residues 1 to 22 (MINIEDISKSSNQSEEKQLKST). Ricin B-type lectin domains lie at 1–107 (MINI…WTID) and 100–248 (KTQI…WGIN).

It belongs to the cup family.

Its subcellular location is the cytoplasm. The protein resides in the membrane. May play an important role in stabilizing and/or regulating the cell membrane during Ca(2+) stress or certain stages of development. The polypeptide is Calcium up-regulated protein G (cupG) (Dictyostelium discoideum (Social amoeba)).